We begin with the raw amino-acid sequence, 325 residues long: MLKAPRFWYQPRSLLGGILSPFSFLYQIIVRIRRGLYAVGLKKISKFPVPIVIVGNITVGGSGKTPFVIWLANELKNRGFRPGVVSRGYGGKANRFPQTVTENSDPLQVGDEAVLLMKKIDCPMVVCRDRGAAVKHLLRNFQCDVVIGDDGLQHYSLGRDLEIALIDDRHLGNGRCLPAGPLREPKSRLNTVDFVVPKQLRPNEIYQLKNPAKKIDFNELKELTVHAVAGIGNPGYFFKQLETLGANVIAHPFRDHYFYRSEDFNFDDDHLIILTEKDAIKCKQFDDERLFCFSVDAVVPDQFQNDFFRLISNIILRKQAQREGI.

ATP is bound at residue 58–65 (TVGGSGKT).

This sequence belongs to the LpxK family.

The catalysed reaction is a lipid A disaccharide + ATP = a lipid IVA + ADP + H(+). It functions in the pathway glycolipid biosynthesis; lipid IV(A) biosynthesis; lipid IV(A) from (3R)-3-hydroxytetradecanoyl-[acyl-carrier-protein] and UDP-N-acetyl-alpha-D-glucosamine: step 6/6. Functionally, transfers the gamma-phosphate of ATP to the 4'-position of a tetraacyldisaccharide 1-phosphate intermediate (termed DS-1-P) to form tetraacyldisaccharide 1,4'-bis-phosphate (lipid IVA). This Coxiella burnetii (strain RSA 331 / Henzerling II) protein is Tetraacyldisaccharide 4'-kinase.